The chain runs to 153 residues: MFGKSTYPALEELQESLSSEQLRILKDQVESEGQDPAPQSQFNYAWGLIKSSNYKMQQQGISILSELYRDVPSMRRECLYYLALGSYKIGDYSNATRYADTLLKNEPENKQAQDLKKSIHEKVTQEGLIGIGIAGGALAVGVGILGALLRKKR.

At 1–127 (MFGKSTYPAL…SIHEKVTQEG (127 aa)) the chain is on the cytoplasmic side. The TPR repeat unit spans residues 76-109 (RECLYYLALGSYKIGDYSNATRYADTLLKNEPEN). Residues 128-148 (LIGIGIAGGALAVGVGILGAL) form a helical membrane-spanning segment. Over 149–153 (LRKKR) the chain is Mitochondrial intermembrane.

Belongs to the FIS1 family.

It is found in the mitochondrion outer membrane. Its function is as follows. Has a role in mitochondrial fission. Has a role in outer membrane fission but not matrix separation. This Debaryomyces hansenii (strain ATCC 36239 / CBS 767 / BCRC 21394 / JCM 1990 / NBRC 0083 / IGC 2968) (Yeast) protein is Mitochondrial fission 1 protein (FIS1).